A 129-amino-acid chain; its full sequence is Small ribosomal subunit protein uS9 (129 aa).

The protein belongs to the universal ribosomal protein uS9 family.

This is Small ribosomal subunit protein uS9 from Helicobacter pylori (strain HPAG1).